A 547-amino-acid polypeptide reads, in one-letter code: Sodium-coupled neutral amino acid transporter 4 (547 aa).

Topologically, residues 1 to 104 (MDPIELRSVN…GLSYAMANTG (104 aa)) are extracellular. A Phosphoserine modification is found at Ser-49. The chain crosses the membrane as a helical span at residues 105–125 (IVLFVIMLLTVAILSLYSVHL). Residues 126-151 (LLKTAKEGGSLIYEKLGEKAFGWPGK) lie on the Cytoplasmic side of the membrane. A helical membrane pass occupies residues 152-172 (IGAFISITMQNIGAMSSYLFI). The Extracellular portion of the chain corresponds to 173-195 (IKYELPEVIRVFMGLEENTGEWY). Residues 196-216 (LNGNYLVLFVSVGIILPLSLL) form a helical membrane-spanning segment. Topologically, residues 217–220 (KNLG) are cytoplasmic. A helical membrane pass occupies residues 221–241 (YLGYTSGFSLTCMVFFVSVVI). The Extracellular segment spans residues 242-332 (YKKFQIPCPL…PKYFVFNSRT (91 aa)). A disulfide bridge links Cys-249 with Cys-321. 3 N-linked (GlcNAc...) asparagine glycosylation sites follow: Asn-260, Asn-264, and Asn-276. A helical membrane pass occupies residues 333-353 (AYAIPILAFAFVCHPEVLPIY). Residues 354–369 (SELKDRSRRKMQTVSN) lie on the Cytoplasmic side of the membrane. The helical transmembrane segment at 370–390 (ISITGMLVMYLLAALFGYLSF) threads the bilayer. The Extracellular portion of the chain corresponds to 391-411 (YGEVEDELLHAYSKVYTFDTA). A helical membrane pass occupies residues 412 to 432 (LLMVRLAVLVAVTLTVPIVLF). Residues 433-453 (PIRTSVITLLFPRRPFSWVKH) are Cytoplasmic-facing. The helical transmembrane segment at 454-474 (FGIAAIIIALNNVLVILVPTI) threads the bilayer. Topologically, residues 475-476 (KY) are extracellular. The chain crosses the membrane as a helical span at residues 477 to 497 (IFGFIGASSATMLIFILPAAF). At 498-514 (YLKLVKKEPLRSPQKIG) the chain is on the cytoplasmic side. A helical membrane pass occupies residues 515–535 (ALVFLVTGIIFMMGSMALIII). Over 536-547 (DWIYNPPNPDHH) the chain is Extracellular.

The protein belongs to the amino acid/polyamine transporter 2 family. Post-translationally, the disulfide bond plays an important role in substrate transport, but has no effect on trafficking to the cell surface. As to expression, expressed predominantly in liver, and at lower level in skeletal muscle.

It is found in the cell membrane. The protein localises to the cell projection. It localises to the microvillus membrane. It catalyses the reaction L-alanine(in) + Na(+)(in) = L-alanine(out) + Na(+)(out). It carries out the reaction L-serine(in) + Na(+)(in) = L-serine(out) + Na(+)(out). The catalysed reaction is glycine(in) + Na(+)(in) = glycine(out) + Na(+)(out). The enzyme catalyses L-cysteine(in) + Na(+)(in) = L-cysteine(out) + Na(+)(out). It catalyses the reaction L-asparagine(in) + Na(+)(in) = L-asparagine(out) + Na(+)(out). It carries out the reaction L-threonine(in) + Na(+)(in) = L-threonine(out) + Na(+)(out). The catalysed reaction is L-proline(in) + Na(+)(in) = L-proline(out) + Na(+)(out). The enzyme catalyses L-methionine(in) + Na(+)(in) = L-methionine(out) + Na(+)(out). It catalyses the reaction L-glutamine(in) + Na(+)(in) = L-glutamine(out) + Na(+)(out). It carries out the reaction L-histidine(in) + Na(+)(in) = L-histidine(out) + Na(+)(out). Functionally, symporter that cotransports neutral amino acids and sodium ions from the extraccellular to the intracellular side of the cell membrane. The transport is electrogenic, pH dependent and partially tolerates substitution of Na(+) by Li(+). Preferentially transports smaller amino acids, such as glycine, L-alanine, L-serine, L-asparagine and L-threonine, followed by L-cysteine, L-histidine, L-proline and L-glutamine and L-methionine. The chain is Sodium-coupled neutral amino acid transporter 4 from Rattus norvegicus (Rat).